Consider the following 740-residue polypeptide: Vacuolar protein sorting-associated protein 51 homolog (740 aa).

Coiled coils occupy residues 65–87 (SATDTIRRMKDDFKQMETDVNLL) and 322–344 (RALDRLHRRLQAMRNICRGLEVQ).

The protein belongs to the VPS51 family. Component of the Golgi-associated retrograde protein (GARP) complex.

Functionally, may act as a component of the GARP complex that is involved in retrograde transport from early and late endosomes to the trans-Golgi network (TGN). The chain is Vacuolar protein sorting-associated protein 51 homolog from Drosophila melanogaster (Fruit fly).